The sequence spans 257 residues: BTB/POZ domain-containing protein KCTD1 (257 aa).

Residues 1–25 (MSRPLITRSPASPLNNQGIPTPAQL) are disordered. Phosphoserine is present on residues serine 9 and serine 12. Residues 9–25 (SPASPLNNQGIPTPAQL) show a composition bias toward polar residues. One can recognise a BTB domain in the interval 30 to 100 (APVHIDVGGH…LRTSKLLIPD (71 aa)).

Forms homopentamers. Interacts with KCTD15, probably forming heteropentamers depending on its abundance in a cell-type dependent manner. Interacts with TFAP2A, TFAP2B and TFAP2C via the BTB domain. In terms of processing, sumoylated.

The protein resides in the nucleus. May repress the transcriptional activity of AP-2 family members, including TFAP2A, TFAP2B and TFAP2C to various extent. This Rattus norvegicus (Rat) protein is BTB/POZ domain-containing protein KCTD1 (Kctd1).